We begin with the raw amino-acid sequence, 286 residues long: Deaminated glutathione amidase (286 aa).

One can recognise a CN hydrolase domain in the interval 4 to 252 (ANVALLQLCS…VSALKVKIET (249 aa)). Residue Glu42 is the Proton acceptor of the active site. Lys115 is a catalytic residue. Cys157 acts as the Nucleophile in catalysis.

The protein belongs to the carbon-nitrogen hydrolase superfamily. NIT1/NIT2 family.

It carries out the reaction N-(4-oxoglutaryl)-L-cysteinylglycine + H2O = L-cysteinylglycine + 2-oxoglutarate. In terms of biological role, hydrolyzes deaminated glutathione (dGSH, 2-oxoglutaramate) to alpha-ketoglutarate (alpha-KG) and cysteinylglycine (specific activity 6.50 umol/min/mg), has less activity against alpha-ketoglutaramate (a-KGM, specific activity 0.20 umol/min/mg), very little activity on glutathione and none on L-glutamine. May function as a metabolite repair enzyme. The polypeptide is Deaminated glutathione amidase (Yersinia enterocolitica).